We begin with the raw amino-acid sequence, 322 residues long: Adenine deaminase (322 aa).

Zn(2+)-binding residues include His11, His13, and His189. Glu192 (proton donor) is an active-site residue. Asp270 is a Zn(2+) binding site. A substrate-binding site is contributed by Asp271.

Belongs to the metallo-dependent hydrolases superfamily. Adenosine and AMP deaminases family. Adenine deaminase type 2 subfamily. Zn(2+) serves as cofactor.

It carries out the reaction adenine + H2O + H(+) = hypoxanthine + NH4(+). Catalyzes the hydrolytic deamination of adenine to hypoxanthine. Plays an important role in the purine salvage pathway and in nitrogen catabolism. This is Adenine deaminase from Rhizobium rhizogenes (strain K84 / ATCC BAA-868) (Agrobacterium radiobacter).